The sequence spans 160 residues: uncharacterized protein (160 aa).

Positions 20–152 constitute an HTH marR-type domain; sequence EREIWVLYMK…VYEGLSILSR (133 aa). The H-T-H motif DNA-binding region spans 66–89; sequence VSDIAEKMGASLSNTTGLLDRLEK.

This is an uncharacterized protein from Bacillus subtilis (strain 168).